A 224-amino-acid chain; its full sequence is 7-cyano-7-deazaguanine synthase (224 aa).

10 to 20 (LSGGLDSATVV) is an ATP binding site. C189, C199, C202, and C205 together coordinate Zn(2+).

Belongs to the QueC family. It depends on Zn(2+) as a cofactor.

It carries out the reaction 7-carboxy-7-deazaguanine + NH4(+) + ATP = 7-cyano-7-deazaguanine + ADP + phosphate + H2O + H(+). The protein operates within purine metabolism; 7-cyano-7-deazaguanine biosynthesis. Catalyzes the ATP-dependent conversion of 7-carboxy-7-deazaguanine (CDG) to 7-cyano-7-deazaguanine (preQ(0)). This chain is 7-cyano-7-deazaguanine synthase, found in Pseudomonas putida (strain ATCC 47054 / DSM 6125 / CFBP 8728 / NCIMB 11950 / KT2440).